A 697-amino-acid polypeptide reads, in one-letter code: Heat shock protein homolog SSE1 (697 aa).

Positions 664–674 (EMAEKLAAQRA) are enriched in low complexity. A disordered region spans residues 664–697 (EMAEKLAAQRAAEQKAQESKAESDKDAEGDIDLD). Positions 675-691 (AEQKAQESKAESDKDAE) are enriched in basic and acidic residues.

It belongs to the heat shock protein 70 family.

The protein localises to the cytoplasm. The sequence is that of Heat shock protein homolog SSE1 (SSE1) from Eremothecium gossypii (strain ATCC 10895 / CBS 109.51 / FGSC 9923 / NRRL Y-1056) (Yeast).